Here is a 198-residue protein sequence, read N- to C-terminus: Recombination protein RecR (198 aa).

The segment at 57–72 (CSVCGHITENDPCYIC) adopts a C4-type zinc-finger fold. The Toprim domain maps to 80 to 175 (SVICVVEDDK…KVTRLAQGLS (96 aa)).

This sequence belongs to the RecR family.

Functionally, may play a role in DNA repair. It seems to be involved in an RecBC-independent recombinational process of DNA repair. It may act with RecF and RecO. This is Recombination protein RecR from Staphylococcus aureus (strain MSSA476).